Here is a 723-residue protein sequence, read N- to C-terminus: DNA-binding protein RFX2 (723 aa).

Positions Met1 to Met46 are disordered. Residues Ser10–Ala20 show a composition bias toward low complexity. Ser28 is subject to Phosphoserine. Positions His199–Pro274 form a DNA-binding region, RFX-type winged-helix. Residues Gln292 to Gln332 are disordered. Low complexity predominate over residues Thr307 to Thr322. Polar residues predominate over residues Pro323–Gln332. Position 416 is a phosphoserine (Ser416). Residues Gly689–Ile723 are disordered.

This sequence belongs to the RFX family. In terms of assembly, homodimer; probably only forms homodimers in testis. Heterodimer; heterodimerizes with RFX1 and RFX3.

It is found in the nucleus. Its subcellular location is the cytoplasm. Its function is as follows. Transcription factor that acts as a key regulator of spermatogenesis. Acts by regulating expression of genes required for the haploid phase during spermiogenesis, such as genes required for cilium assembly and function. Recognizes and binds the X-box, a regulatory motif with DNA sequence 5'-GTNRCC(0-3N)RGYAAC-3' present on promoters. Probably activates transcription of the testis-specific histone gene H1-6. The polypeptide is DNA-binding protein RFX2 (RFX2) (Macaca fascicularis (Crab-eating macaque)).